A 305-amino-acid polypeptide reads, in one-letter code: Glyceraldehyde-3-phosphate dehydrogenase 2, cytosolic (305 aa).

NAD(+)-binding residues include aspartate 3 and arginine 50. D-glyceraldehyde 3-phosphate-binding positions include 121–123 (SCT), threonine 152, 181–182 (TG), and arginine 204. Cysteine 122 functions as the Nucleophile in the catalytic mechanism. Asparagine 286 contributes to the NAD(+) binding site.

This sequence belongs to the glyceraldehyde-3-phosphate dehydrogenase family. As to quaternary structure, homotetramer.

The protein resides in the cytoplasm. The enzyme catalyses D-glyceraldehyde 3-phosphate + phosphate + NAD(+) = (2R)-3-phospho-glyceroyl phosphate + NADH + H(+). It participates in carbohydrate degradation; glycolysis; pyruvate from D-glyceraldehyde 3-phosphate: step 1/5. Functionally, key enzyme in glycolysis that catalyzes the first step of the pathway by converting D-glyceraldehyde 3-phosphate (G3P) into 3-phospho-D-glyceroyl phosphate. Essential for the maintenance of cellular ATP levels and carbohydrate metabolism. The sequence is that of Glyceraldehyde-3-phosphate dehydrogenase 2, cytosolic (GAPC) from Hordeum vulgare (Barley).